Here is a 175-residue protein sequence, read N- to C-terminus: RNA pyrophosphohydrolase (175 aa).

The region spanning 6 to 149 (GYRPNVGIVI…KRDVYRRVMK (144 aa)) is the Nudix hydrolase domain. The Nudix box signature appears at 38–59 (GGINPGETAEQAMYRELFEEVG).

The protein belongs to the Nudix hydrolase family. RppH subfamily. A divalent metal cation serves as cofactor.

Accelerates the degradation of transcripts by removing pyrophosphate from the 5'-end of triphosphorylated RNA, leading to a more labile monophosphorylated state that can stimulate subsequent ribonuclease cleavage. The polypeptide is RNA pyrophosphohydrolase (Erwinia tasmaniensis (strain DSM 17950 / CFBP 7177 / CIP 109463 / NCPPB 4357 / Et1/99)).